The sequence spans 338 residues: Ketoreductase azaE (338 aa).

K41 and Y166 together coordinate NADP(+).

This sequence belongs to the NAD(P)-dependent epimerase/dehydratase family. Dihydroflavonol-4-reductase subfamily.

It participates in secondary metabolite biosynthesis. Ketoreductase; part of the gene cluster that mediates the biosynthesis of azaphilones, a class of fungal metabolites characterized by a highly oxygenated pyrano-quinone bicyclic core and exhibiting a broad range of bioactivities. In the first step, the non-reducing polyketide synthase azaA forms the hexaketide precursor from successive condensations of five malonyl-CoA units, presumably with a simple acetyl-CoA starter unit. The reactive polyketide chain then undergoes a PT-mediated C2-C7 cyclization to afford the aromatic ring and is eventually released as an aldehyde through the R-domain. The putative ketoreductase azaE is proposed to catalyze the reduction of the terminal ketone resulting in the early culture product FK17-P2a. The monooxygenase azaH was demonstrated to be the only enzyme required to convert FK17-P2a to azanigerone E. AzaH first hydroxylates the benzaldehyde intermediate FK17-P2a at C4, which triggers the formation of the pyran-ring to afford azanigerone E. In parallel, the 2,4-dimethylhexanoyl chain is synthesized by the HR-PKS azaB and is proposed to be transferred to the C4-hydroxyl of azanigerone E by the acyltransferase azaD directly from the ACP domain of azaB. Alternatively, the 2,4-dimethyl-hexanoyl chain may be offloaded from the HR-PKS as a carboxylic acid and converted to an acyl-CoA by azaF. The resulting acyl-CoA molecule could then be taken up as a substrate by AzaD to form azanigerone B. To yield the carboxylic acid substituent in azanigerone A, the hydroxypropyl side chain of azanigerone B would need to undergo a C-C oxidative cleavage catalyzed by cytochrome P450 AzaI. AzaI is proposed to act on a vicinal diol that leads to a C-C bond scission either through an alkoxyradical intermediate or a peroxy complex. In the biosynthesis of azanigerone A, azanigerone B first undergoes hydroxylation at C10, possibly catalyzed by one of the two FAD-dependent monooxygenases encoded in the cluster, azaG or azaL, resulting in the vicinal diol azanigerone C. Oxidative cleavage of azanigerone C by azaI would yield the corresponding aldehyde derivative of azanigerone A. Finally, the dehydrogenase azaJ is proposed to convert the aldehyde functional group into the carboxylic acid, completing the conversion from azanigerone B to azanigerone A. Alternatively, the oxidation of aldehyde to carboxylic acid may be catalyzed by the same P450 enzyme azaI via consecutive oxidation or by endogenous alcohol dehydrogenase. The protein is Ketoreductase azaE of Aspergillus niger (strain ATCC 1015 / CBS 113.46 / FGSC A1144 / LSHB Ac4 / NCTC 3858a / NRRL 328 / USDA 3528.7).